Reading from the N-terminus, the 621-residue chain is Uptake hydrogenase large subunit (621 aa).

Ni(2+) contacts are provided by C75, C78, C600, and C603.

Belongs to the [NiFe]/[NiFeSe] hydrogenase large subunit family. As to quaternary structure, heterodimer of a large and a small subunit. The cofactor is Ni(2+).

It localises to the cell membrane. The catalysed reaction is H2 + A = AH2. Functionally, this enzyme recycles the H(2) produced by nitrogenase to increase the production of ATP and to protect nitrogenase against inhibition or damage by O(2) under carbon- or phosphate-limited conditions. This chain is Uptake hydrogenase large subunit (hupL), found in Alcaligenes hydrogenophilus.